Reading from the N-terminus, the 229-residue chain is Potassium/proton antiporter CemA (229 aa).

3 consecutive transmembrane segments (helical) span residues 7–27, 114–134, and 190–210; these read FTPLLYFASIVFLPWWISLSF, IISFVILSGYSIFGNEELVIL, and ISGLVSTFPVILDTLLKYWIF.

Belongs to the CemA family.

Its subcellular location is the plastid. It localises to the chloroplast inner membrane. The catalysed reaction is K(+)(in) + H(+)(out) = K(+)(out) + H(+)(in). Contributes to K(+)/H(+) antiport activity by supporting proton efflux to control proton extrusion and homeostasis in chloroplasts in a light-dependent manner to modulate photosynthesis. Prevents excessive induction of non-photochemical quenching (NPQ) under continuous-light conditions. Indirectly promotes efficient inorganic carbon uptake into chloroplasts. This chain is Potassium/proton antiporter CemA, found in Jasminum nudiflorum (Winter jasmine).